We begin with the raw amino-acid sequence, 196 residues long: Imidazoleglycerol-phosphate dehydratase (196 aa).

The protein belongs to the imidazoleglycerol-phosphate dehydratase family.

It is found in the cytoplasm. The enzyme catalyses D-erythro-1-(imidazol-4-yl)glycerol 3-phosphate = 3-(imidazol-4-yl)-2-oxopropyl phosphate + H2O. The protein operates within amino-acid biosynthesis; L-histidine biosynthesis; L-histidine from 5-phospho-alpha-D-ribose 1-diphosphate: step 6/9. In Clostridium botulinum (strain 657 / Type Ba4), this protein is Imidazoleglycerol-phosphate dehydratase.